A 404-amino-acid chain; its full sequence is Subtilisin-like proteinase Mp1 (404 aa).

The signal sequence occupies residues 1 to 19 (MVGFKTLALHLAAVLPALA). Positions 20-112 (APVDKQATQV…VEPDQVWDLY (93 aa)) are excised as a propeptide. Positions 33 to 111 (SYIITLKQGA…FVEPDQVWDL (79 aa)) constitute an Inhibitor I9 domain. The 284-residue stretch at 121–404 (PWGLGSISHR…NLIAFNGVTA (284 aa)) folds into the Peptidase S8 domain. N-linked (GlcNAc...) asparagine glycosylation occurs at N133. Residues D154, H186, and S347 each act as charge relay system in the active site.

The protein belongs to the peptidase S8 family.

Its subcellular location is the secreted. This is Subtilisin-like proteinase Mp1 from Magnaporthiopsis poae (Kentucky bluegrass fungus).